A 413-amino-acid chain; its full sequence is Cell wall mannoprotein HSP150 (413 aa).

The N-terminal stretch at 1–18 is a signal peptide; that stretch reads MQYKKTLVASALAATTLA. Positions 19–72 are excised as a propeptide; sequence AYAPSEPWSTLTPTATYSGGVTDYASTFGIAVQPISTTSSASSAATTASSKAKR. PIR1/2/3 repeat units follow at residues 73–89, 97–115, 116–134, 140–158, 164–182, 188–206, 207–225, 226–244, 245–263, 264–282, and 283–300; these read AASQ…TTTA, AAAV…TKTT, AAAV…TTTL, and QAAS…TATS.

Belongs to the PIR protein family. In terms of processing, covalently linked to beta-1,3-glucan of the inner cell wall layer via an alkali-sensitive ester linkage between the gamma-carboxyl group of glutamic acids, arising from specific glutamines within the PIR1/2/3 repeats, and hydroxyl groups of glucoses of beta-1,3-glucan chains. Post-translationally, the propeptide is cleaved off in the late Golgi. While both peptides are secreted, only a fraction of the mature glycoprotein is incorporated into the cell wall. O-glycosylated. Extensively O-mannosylated.

It localises to the secreted. The protein localises to the cell wall. Functionally, component of the outer cell wall layer. Required for stability of the cell wall and for optimal growth. Required for resistance against several antifungal and cell wall-perturbing agents and for tolerance to heat shock. The polypeptide is Cell wall mannoprotein HSP150 (HSP150) (Saccharomyces cerevisiae (strain ATCC 204508 / S288c) (Baker's yeast)).